We begin with the raw amino-acid sequence, 517 residues long: Sphingolipid C9-methyltransferase A (517 aa).

The next 2 helical transmembrane spans lie at 58-78 and 80-100; these read LLIL…GGGL and TTIF…WSIA. S-adenosyl-L-methionine is bound by residues 223-224, 286-291, and 316-317; these read YT, TLGRNQ, and YR. N-linked (GlcNAc...) asparagine glycosylation is present at N290. N-linked (GlcNAc...) asparagine glycosylation occurs at N478.

It belongs to the CFA/CMAS family.

The protein resides in the membrane. It catalyses the reaction a (4E,8E)-4-sphinga-4,8-dienine ceramide + S-adenosyl-L-methionine = a 9-methyl-(4E,8E)-sphinga-4,8-dienine ceramide + S-adenosyl-L-homocysteine + H(+). The protein operates within lipid metabolism; sphingolipid metabolism. In terms of biological role, catalyzes methylation of the sphingoid base component of glucosylceramides (GluCers) at the C9-position. Sphingolipid C9-methylation requires 4,8-desaturated ceramides as substrates. Glucosylceramides play important roles in growth, differentiation and pathogenicity. The methyl group at the C9-position distinguishes fungal glucosylceramides from those of plants and animals and may thus play a role in host-pathogen interactions enabling the host to recognize the fungal attack and initiate specific defense responses. This chain is Sphingolipid C9-methyltransferase A, found in Emericella nidulans (strain FGSC A4 / ATCC 38163 / CBS 112.46 / NRRL 194 / M139) (Aspergillus nidulans).